Reading from the N-terminus, the 239-residue chain is 3,4-dihydroxyphthalate decarboxylase (239 aa).

The active-site Proton donor/acceptor is the Glu-84. Positions 84, 103, 105, and 171 each coordinate a divalent metal cation.

It belongs to the aldolase class II family. It depends on a divalent metal cation as a cofactor.

It catalyses the reaction 3,4-dihydroxyphthalate + H(+) = 3,4-dihydroxybenzoate + CO2. It participates in xenobiotic degradation; phthalate degradation. Its function is as follows. Catalyzes the decarboxylation of 3,4-dihydroxyphthalate to protocatechuate (3,4-dihydroxybenzoate) during phthalate metabolism. This Terrabacter sp. (strain DBF63) protein is 3,4-dihydroxyphthalate decarboxylase.